The following is a 157-amino-acid chain: 3-hydroxybutyryl-CoA dehydratase (157 aa).

The 99-residue stretch at 22–120 folds into the MaoC-like domain; sequence KKEISSSDVV…IPERRRARLA (99 aa).

The catalysed reaction is (3R)-3-hydroxybutanoyl-CoA = (2E)-butenoyl-CoA + H2O. Functionally, involved in the regeneration of glyoxylate from a molecule of acetyl-CoA. The protein is 3-hydroxybutyryl-CoA dehydratase of Methylorubrum extorquens (strain ATCC 14718 / DSM 1338 / JCM 2805 / NCIMB 9133 / AM1) (Methylobacterium extorquens).